Reading from the N-terminus, the 274-residue chain is Diaminopimelate epimerase (274 aa).

Asparagine 11 and asparagine 65 together coordinate substrate. Cysteine 74 serves as the catalytic Proton donor. Residues 75–76 (GN), asparagine 158, asparagine 191, and 209–210 (ER) each bind substrate. Residue cysteine 218 is the Proton acceptor of the active site. Substrate is bound at residue 219 to 220 (GT).

The protein belongs to the diaminopimelate epimerase family. Homodimer.

It is found in the cytoplasm. The catalysed reaction is (2S,6S)-2,6-diaminopimelate = meso-2,6-diaminopimelate. Its pathway is amino-acid biosynthesis; L-lysine biosynthesis via DAP pathway; DL-2,6-diaminopimelate from LL-2,6-diaminopimelate: step 1/1. In terms of biological role, catalyzes the stereoinversion of LL-2,6-diaminopimelate (L,L-DAP) to meso-diaminopimelate (meso-DAP), a precursor of L-lysine and an essential component of the bacterial peptidoglycan. This chain is Diaminopimelate epimerase, found in Carboxydothermus hydrogenoformans (strain ATCC BAA-161 / DSM 6008 / Z-2901).